The chain runs to 612 residues: Elongation factor 4 (612 aa).

Residues 11–193 (KHIRNFSIVA…EIVKKVPAPN (183 aa)) form the tr-type G domain. GTP contacts are provided by residues 23 to 28 (DHGKST) and 140 to 143 (NKID).

This sequence belongs to the TRAFAC class translation factor GTPase superfamily. Classic translation factor GTPase family. LepA subfamily.

It localises to the cell membrane. It carries out the reaction GTP + H2O = GDP + phosphate + H(+). Its function is as follows. Required for accurate and efficient protein synthesis under certain stress conditions. May act as a fidelity factor of the translation reaction, by catalyzing a one-codon backward translocation of tRNAs on improperly translocated ribosomes. Back-translocation proceeds from a post-translocation (POST) complex to a pre-translocation (PRE) complex, thus giving elongation factor G a second chance to translocate the tRNAs correctly. Binds to ribosomes in a GTP-dependent manner. In Lactobacillus gasseri (strain ATCC 33323 / DSM 20243 / BCRC 14619 / CIP 102991 / JCM 1131 / KCTC 3163 / NCIMB 11718 / NCTC 13722 / AM63), this protein is Elongation factor 4.